We begin with the raw amino-acid sequence, 464 residues long: Myrosinase 1 (464 aa).

Position 19 (Gln19) interacts with substrate. Residues His39 and Asp52 each coordinate Zn(2+). Positions 122 and 166 each coordinate substrate. Glu167 acts as the Nucleophile in catalysis. Catalysis depends on Glu374, which acts as the Proton donor. The N-linked (GlcNAc...) asparagine glycan is linked to Asn397.

In terms of assembly, homodimer. Expressed in the skeletal muscle tissues surrounding the head, abdomen and thorax. Not expressed in flight muscles (at protein level).

The catalysed reaction is a thioglucoside + H2O = a sugar + a thiol.. In terms of biological role, hydrolyzes glucosinolates to a labile aglycone. This rapidly undergoes spontaneous rearrangement, eliminating sulfur to yield a number of toxic metabolites. Thereby developing a chemical defense system that exploits and mimics the host plant. This is Myrosinase 1 from Brevicoryne brassicae (Mealy cabbage aphid).